The chain runs to 171 residues: Putative charged multivesicular body protein 4B-like protein CHMP4BP1 (171 aa).

A compositionally biased stretch (basic and acidic residues) spans 1–17; it reads MLSKKQEFLEKKIEQRH. Disordered regions lie at residues 1–24 and 132–171; these read MLSK…NKPA and EQEE…KTTT.

Belongs to the SNF7 family.

The protein is Putative charged multivesicular body protein 4B-like protein CHMP4BP1 (CHMP4BP1) of Homo sapiens (Human).